Here is a 323-residue protein sequence, read N- to C-terminus: Calcium homeostasis modulator protein 2 (323 aa).

Topologically, residues 1–21 (MAALIAENFRFLSLFFKSKDV) are cytoplasmic. The tract at residues 14–39 (LFFKSKDVMIFNGLVALGTVGSQELF) is central pore. Residues 22–43 (MIFNGLVALGTVGSQELFSVVA) traverse the membrane as a helical segment. Residues 44 to 52 (FHCPCSPAR) lie on the Extracellular side of the membrane. Disulfide bonds link Cys46/Cys130 and Cys48/Cys162. The helical transmembrane segment at 53–76 (NYLYGLAAIGVPALVLFIIGIILN) threads the bilayer. Residues 77 to 101 (NHTWNLVAECQHRRTKNCSAAPTFL) are Cytoplasmic-facing. The helical transmembrane segment at 102 to 132 (LLSSILGRAAVAPVTWSVISLLRGEAYVCAL) threads the bilayer. The Extracellular portion of the chain corresponds to 133–179 (SEFVDPSSLTAREEHFPSAHATEILARFPCKENPDNLSDFREEVSRR). The tract at residues 145–152 (EEHFPSAH) is hemichannel docking. Residues 180–206 (LRYESQLFGWLLIGVVAILVFLTKCLK) traverse the membrane as a helical segment. The Cytoplasmic portion of the chain corresponds to 207 to 323 (HYCSPLSYRQ…DNVEMALLPS (117 aa)). An intersubunit interaction region spans residues 214–251 (YRQEAYWAQYRANEDQLFQRTAEVHSRVLAANNVRRFF).

It belongs to the CALHM family. Homo-undecamer. Two undecameric hemichannels can assemble in a head-to-head manner to form a gap junction. As to expression, placenta.

It is found in the cell membrane. The catalysed reaction is ATP(in) = ATP(out). Its activity is regulated as follows. Inhibited by Ca(2+) and ruthenium red in a voltage-dependent way. Its function is as follows. Pore-forming subunit of Ca(2+) homeostasis modulator channels. Mediates ATP release from astrocytes and ATP-induced Ca(2+) influx in microglia thus regulating neuronal ATP and Ca(2+) homeostasis, synaptic transmission and neuroinflammatory response. May form intercellular gap junctions. The gating mechanism remains unknown. The polypeptide is Calcium homeostasis modulator protein 2 (Homo sapiens (Human)).